A 96-amino-acid chain; its full sequence is CLAVATA3/ESR (CLE)-related protein 43 (96 aa).

Residues 1–28 (MGCRDILLTFSVALLLISLFQIWLFREG) form the signal peptide. Positions 71-96 (FGLNNTNSRFEDSNRRIPSSPDRLHN) are disordered. N-linked (GlcNAc...) asparagine glycosylation occurs at Asn74. A hydroxyproline mark is found at Pro88 and Pro91. Pro91 carries O-linked (Ara...) hydroxyproline glycosylation.

It belongs to the CLV3/ESR signal peptide family. In terms of processing, the O-glycosylation (arabinosylation) of the hydroxyproline Pro-91 enhances binding affinity of the CLE43p peptide for its receptor. Expressed at low levels in seedlings.

The protein localises to the secreted. The protein resides in the extracellular space. Extracellular signal peptide that regulates cell fate. Promotes pollen tube growth prolongation in a SKM1 and SKM2-dependent manner, especially under relatively high temperature (at 30 degrees Celsius), thus conferring tolerance against high temperature probably through the maintenance of mitochondrial activity. This chain is CLAVATA3/ESR (CLE)-related protein 43, found in Arabidopsis thaliana (Mouse-ear cress).